The primary structure comprises 128 residues: Fluoride-specific ion channel FluC (128 aa).

Helical transmembrane passes span 4–24 (VMGI…RYAI), 37–57 (FGTF…WSFF), 65–85 (TFRL…STFS), and 101–121 (FGYL…GFFI). Na(+) is bound by residues Gly76 and Thr79.

The protein belongs to the fluoride channel Fluc/FEX (TC 1.A.43) family.

The protein localises to the cell inner membrane. The catalysed reaction is fluoride(in) = fluoride(out). Na(+) is not transported, but it plays an essential structural role and its presence is essential for fluoride channel function. Fluoride-specific ion channel. Important for reducing fluoride concentration in the cell, thus reducing its toxicity. The chain is Fluoride-specific ion channel FluC from Desulfotalea psychrophila (strain LSv54 / DSM 12343).